The following is a 332-amino-acid chain: Tetraacyldisaccharide 4'-kinase (332 aa).

60–67 is an ATP binding site; sequence TVGGTGKT.

This sequence belongs to the LpxK family.

It carries out the reaction a lipid A disaccharide + ATP = a lipid IVA + ADP + H(+). The protein operates within glycolipid biosynthesis; lipid IV(A) biosynthesis; lipid IV(A) from (3R)-3-hydroxytetradecanoyl-[acyl-carrier-protein] and UDP-N-acetyl-alpha-D-glucosamine: step 6/6. Its function is as follows. Transfers the gamma-phosphate of ATP to the 4'-position of a tetraacyldisaccharide 1-phosphate intermediate (termed DS-1-P) to form tetraacyldisaccharide 1,4'-bis-phosphate (lipid IVA). The polypeptide is Tetraacyldisaccharide 4'-kinase (Pseudomonas aeruginosa (strain LESB58)).